A 126-amino-acid chain; its full sequence is MAKYTNDELLEAFGEMTLVELSEFVKAFEEKFDVEAAAPVAAVAAVAGAAAPAEEEKDEFDVILSAVGDKKIQVIKAVRAITNLGLAEAKALVDGAPKAVLEKAKKEDAEKAKAQLEEAGASVELK.

It belongs to the bacterial ribosomal protein bL12 family. As to quaternary structure, homodimer. Part of the ribosomal stalk of the 50S ribosomal subunit. Forms a multimeric L10(L12)X complex, where L10 forms an elongated spine to which 2 to 4 L12 dimers bind in a sequential fashion. Binds GTP-bound translation factors.

Its function is as follows. Forms part of the ribosomal stalk which helps the ribosome interact with GTP-bound translation factors. Is thus essential for accurate translation. The sequence is that of Large ribosomal subunit protein bL12 from Bifidobacterium longum (strain DJO10A).